The primary structure comprises 422 residues: Glyceraldehyde-3-phosphate dehydrogenase GAPCP1, chloroplastic (422 aa).

The transit peptide at 1 to 69 (MAFSSLLRSA…NARSVQPIKA (69 aa)) directs the protein to the chloroplast. Positions 50–63 (SGISSSLQNGNARS) are enriched in polar residues. The tract at residues 50–84 (SGISSSLQNGNARSVQPIKATATEVPSAVRRSSSS) is disordered. At T70 the chain carries N-acetylthreonine. Residues 96–97 (RI), D118, and R164 each bind NAD(+). Residues 235-237 (SCT), T266, 295-296 (TG), and R318 contribute to the D-glyceraldehyde 3-phosphate site. C236 acts as the Nucleophile in catalysis. N400 contacts NAD(+).

Belongs to the glyceraldehyde-3-phosphate dehydrogenase family. Homotetramer. Expressed in shoot and root vasculature, leaf veins and vascular tissue of flowers and siliques.

It localises to the plastid. Its subcellular location is the chloroplast stroma. The catalysed reaction is D-glyceraldehyde 3-phosphate + phosphate + NAD(+) = (2R)-3-phospho-glyceroyl phosphate + NADH + H(+). Functionally, involved in plastidial glycolytic pathway and plays a specific role in glycolytic energy production in non-green plastids and chloroplasts. Essential for breakdown of starch to form sucrose for export to non-photosynthetic tissues, and to generate primary metabolites for anabolic pathways such as fatty acid and amino acid synthesis. Plays an important role in plant development by providing substrates for the phosphorylated pathway of serine biosynthesis in roots. Plays a crucial role in pollen development. Functionally redundant with GAPCP2. The polypeptide is Glyceraldehyde-3-phosphate dehydrogenase GAPCP1, chloroplastic (GAPCP1) (Arabidopsis thaliana (Mouse-ear cress)).